The sequence spans 1393 residues: DNA-directed RNA polymerase subunit beta' (1393 aa).

Positions 71, 73, 86, and 89 each coordinate Zn(2+). Mg(2+) contacts are provided by D462, D464, and D466. 4 residues coordinate Zn(2+): C811, C885, C892, and C895.

This sequence belongs to the RNA polymerase beta' chain family. As to quaternary structure, the RNAP catalytic core consists of 2 alpha, 1 beta, 1 beta' and 1 omega subunit. When a sigma factor is associated with the core the holoenzyme is formed, which can initiate transcription. The cofactor is Mg(2+). Requires Zn(2+) as cofactor.

The catalysed reaction is RNA(n) + a ribonucleoside 5'-triphosphate = RNA(n+1) + diphosphate. DNA-dependent RNA polymerase catalyzes the transcription of DNA into RNA using the four ribonucleoside triphosphates as substrates. The polypeptide is DNA-directed RNA polymerase subunit beta' (Azorhizobium caulinodans (strain ATCC 43989 / DSM 5975 / JCM 20966 / LMG 6465 / NBRC 14845 / NCIMB 13405 / ORS 571)).